The primary structure comprises 1179 residues: Golgi apparatus protein 1 (1179 aa).

The N-terminal stretch at 1–29 (MAACGRVRRMFRLSAALHLLLLFAAGAEK) is a signal peptide. Over 30 to 1145 (LPGQGVHSQG…MQVMTSPSKN (1116 aa)) the chain is Extracellular. Residues 32–112 (GQGVHSQGQG…GAGAGGGWKL (81 aa)) are disordered. Residues 60-84 (GQQLPQLPQSSQLQQQQQQQQQQQQ) show a composition bias toward low complexity. Residues 85–96 (PQPPQPPFPAGG) show a composition bias toward pro residues. 16 Cys-rich GLG1 repeats span residues 116 to 149 (ESCREDVTRVCPKHTWSNNLAVLECLQDVREPEN), 150 to 212 (EISS…GNIT), 215 to 278 (QCHQ…VKEA), 286 to 346 (QVSE…FEES), 347 to 413 (MSEK…HRGR), 414 to 473 (QVSS…RGEK), 475 to 537 (NLGM…YTEK), 538 to 604 (MVED…YRTE), 609 to 668 (RLSR…DDLV), 670 to 728 (ECRD…KHQK), 729 to 788 (DMNE…RNDT), 796 to 856 (RVSL…KQLS), 858 to 911 (RCHQ…KNSE), 912 to 979 (LMDP…ADQR), 980 to 1035 (LSSD…ECLK), and 1041 to 1101 (IKTE…EDKR). N-linked (GlcNAc...) asparagine glycosylation is found at N165 and N210. N-linked (GlcNAc...) asparagine glycosylation is present at N581. Residues N677 and N786 are each glycosylated (N-linked (GlcNAc...) asparagine). S961 carries the post-translational modification Phosphoserine. The chain crosses the membrane as a helical span at residues 1146 to 1166 (YILSVISGSICILFLIGLMCG). The Cytoplasmic portion of the chain corresponds to 1167–1179 (RITKRVTRELKDR).

Fucosylation is essential for binding to E-selectin. In terms of processing, N-glycosylated. Contains sialic acid residues. In terms of tissue distribution, widely expressed. Highest levels in pancreas, skeletal muscle, placenta, heart, testis and ovary. Also found in the kidney, liver, lung and brain.

The protein resides in the golgi apparatus membrane. The protein localises to the golgi outpost. It localises to the cytoplasm. It is found in the cytoskeleton. Its subcellular location is the microtubule organizing center. Its function is as follows. Binds fibroblast growth factor and E-selectin (cell-adhesion lectin on endothelial cells mediating the binding of neutrophils). The chain is Golgi apparatus protein 1 (GLG1) from Homo sapiens (Human).